Reading from the N-terminus, the 597-residue chain is Cytosolic Fe-S cluster assembly factor nar1 (597 aa).

Cysteine 20, cysteine 62, cysteine 65, cysteine 68, cysteine 216, and cysteine 271 together coordinate [4Fe-4S] cluster. The segment at 428–449 is disordered; the sequence is RASRLPGGNRRLPVGRGAASGS. Positions 462 and 466 each coordinate [4Fe-4S] cluster. Residues 479–505 are disordered; the sequence is REASSSVQSSTSAEVPDSSSKPTPHEQ.

The protein belongs to the NARF family.

Component of the cytosolic Fe/S protein assembly machinery. Required for maturation of extramitochondrial Fe/S proteins. May play a role in the transfer of pre-assembled Fe/S clusters to target apoproteins. The chain is Cytosolic Fe-S cluster assembly factor nar1 (nar1) from Aspergillus niger (strain ATCC MYA-4892 / CBS 513.88 / FGSC A1513).